The primary structure comprises 346 residues: Protein pelota homolog (346 aa).

The protein belongs to the eukaryotic release factor 1 family. Pelota subfamily. Monomer. Requires a divalent metal cation as cofactor.

It localises to the cytoplasm. May function in recognizing stalled ribosomes, interact with stem-loop structures in stalled mRNA molecules, and effect endonucleolytic cleavage of the mRNA. May play a role in the release non-functional ribosomes and degradation of damaged mRNAs. Has endoribonuclease activity. The protein is Protein pelota homolog of Ignicoccus hospitalis (strain KIN4/I / DSM 18386 / JCM 14125).